Consider the following 497-residue polypeptide: Glycerol kinase (497 aa).

Residue T13 coordinates ADP. Residues T13, T14, and S15 each coordinate ATP. A sn-glycerol 3-phosphate-binding site is contributed by T13. R17 provides a ligand contact to ADP. Residues R83, E84, and Y135 each contribute to the sn-glycerol 3-phosphate site. R83, E84, and Y135 together coordinate glycerol. A Phosphohistidine; by HPr modification is found at H231. D245 lines the sn-glycerol 3-phosphate pocket. 2 residues coordinate glycerol: D245 and Q246. T267 and G310 together coordinate ADP. Positions 267, 310, 314, and 411 each coordinate ATP. ADP is bound by residues G411 and N415.

It belongs to the FGGY kinase family. Homotetramer and homodimer (in equilibrium). In terms of processing, the phosphoenolpyruvate-dependent sugar phosphotransferase system (PTS), including enzyme I, and histidine-containing protein (HPr) are required for the phosphorylation, which leads to the activation of the enzyme.

It carries out the reaction glycerol + ATP = sn-glycerol 3-phosphate + ADP + H(+). The protein operates within polyol metabolism; glycerol degradation via glycerol kinase pathway; sn-glycerol 3-phosphate from glycerol: step 1/1. With respect to regulation, activated by phosphorylation and inhibited by fructose 1,6-bisphosphate (FBP). Functionally, key enzyme in the regulation of glycerol uptake and metabolism. Catalyzes the phosphorylation of glycerol to yield sn-glycerol 3-phosphate. The sequence is that of Glycerol kinase from Listeria monocytogenes serotype 4b (strain F2365).